Here is a 105-residue protein sequence, read N- to C-terminus: UPF0235 protein RT0827 (105 aa).

It belongs to the UPF0235 family.

The polypeptide is UPF0235 protein RT0827 (Rickettsia typhi (strain ATCC VR-144 / Wilmington)).